Here is a 4490-residue protein sequence, read N- to C-terminus: Dynein axonemal heavy chain 8 (4490 aa).

Residue Ser-674 is modified to Phosphoserine. AAA stretches follow at residues 1808-2030 (YQNE…VLRT), 2090-2309 (NAVA…KLNL), 2416-2669 (YYPT…IWQG), and 2780-3034 (QFNE…YRRR). ATP-binding positions include 1846–1853 (GPAGTGKT) and 2128–2135 (GPSGSGKT). Residues 3049 to 3346 (YKNIYAEKVK…MDLLNDADTC (298 aa)) are stalk. 3 coiled-coil regions span residues 3072-3164 (DKLM…ALNT), 3290-3354 (LKAN…QAAS), and 3594-3630 (RRVILTEKQELEAERVKLLEDVTFNKRKMKELEDNLL). 2 AAA regions span residues 3432–3662 (LVDP…EVSE) and 3877–4091 (ARKY…FIQN).

It belongs to the dynein heavy chain family. Consists of at least two heavy chains and a number of intermediate and light chains. As to expression, expressed in spermatozoa (at protein level). Not detected in airway epithelial cells (at protein level).

Its subcellular location is the cytoplasm. It is found in the cytoskeleton. The protein resides in the flagellum axoneme. Functionally, force generating protein component of the outer dynein arms (ODAs) in the sperm flagellum. Produces force towards the minus ends of microtubules. Dynein has ATPase activity; the force-producing power stroke is thought to occur on release of ADP. Involved in sperm motility; implicated in sperm flagellar assembly. This Homo sapiens (Human) protein is Dynein axonemal heavy chain 8.